Reading from the N-terminus, the 107-residue chain is Large ribosomal subunit protein uL24 (107 aa).

The protein belongs to the universal ribosomal protein uL24 family. In terms of assembly, part of the 50S ribosomal subunit.

In terms of biological role, one of two assembly initiator proteins, it binds directly to the 5'-end of the 23S rRNA, where it nucleates assembly of the 50S subunit. Its function is as follows. One of the proteins that surrounds the polypeptide exit tunnel on the outside of the subunit. This chain is Large ribosomal subunit protein uL24, found in Thiobacillus denitrificans (strain ATCC 25259 / T1).